Consider the following 247-residue polypeptide: Orotidine 5'-phosphate decarboxylase (247 aa).

Residues aspartate 22, lysine 44, 71–80, threonine 131, arginine 192, glutamine 201, glycine 221, and arginine 222 each bind substrate; that span reads DLKFHDIPNT. The active-site Proton donor is lysine 73.

It belongs to the OMP decarboxylase family. Type 1 subfamily. As to quaternary structure, homodimer.

It catalyses the reaction orotidine 5'-phosphate + H(+) = UMP + CO2. The protein operates within pyrimidine metabolism; UMP biosynthesis via de novo pathway; UMP from orotate: step 2/2. In terms of biological role, catalyzes the decarboxylation of orotidine 5'-monophosphate (OMP) to uridine 5'-monophosphate (UMP). The sequence is that of Orotidine 5'-phosphate decarboxylase from Pectobacterium carotovorum subsp. carotovorum (strain PC1).